A 241-amino-acid polypeptide reads, in one-letter code: MNKDCIFAAPIEKLGDFTFDENVAEVFPDMIQRSVPGYSNIITAIGMFAERFVTANSLVYDLGCSRGAATLSARRHITQPNVKIIGVDNSLPMVERCRQHINAYQSDIPVEILCDDIRNIKIENASMVILNFTLQFVPQQDRQLLLEKIYQGLNPNGGLVLSEKFRFENKKMDDLLIDLHHQFKRANGYSELEVSQKRTALENVMRTDSIETHKERLKSAGFSQIELWFQCFNFGSMVAIK.

Residues Y38, 63 to 65, 88 to 89, 116 to 117, N131, and R198 contribute to the S-adenosyl-L-methionine site; these read GCS, DN, and DI.

This sequence belongs to the class I-like SAM-binding methyltransferase superfamily. Cx-SAM synthase family. Homodimer.

The enzyme catalyses prephenate + S-adenosyl-L-methionine = carboxy-S-adenosyl-L-methionine + 3-phenylpyruvate + H2O. Catalyzes the conversion of S-adenosyl-L-methionine (SAM) to carboxy-S-adenosyl-L-methionine (Cx-SAM). This chain is Carboxy-S-adenosyl-L-methionine synthase, found in Histophilus somni (strain 2336) (Haemophilus somnus).